A 176-amino-acid polypeptide reads, in one-letter code: Probable superoxide oxidase CybB (176 aa).

Helical transmembrane passes span 7-27 (CLQI…WSSI), 44-64 (IHFS…LIQL), 85-105 (VGHW…IAIL), and 137-157 (HLLL…AALL). 2 residues coordinate heme b: histidine 13 and histidine 45. Residues histidine 137 and histidine 151 each contribute to the heme b site.

It belongs to the cytochrome b561 family. The cofactor is heme b.

Its subcellular location is the cell inner membrane. It catalyses the reaction a ubiquinol + 2 O2 = 2 superoxide + a ubiquinone + 2 H(+). In terms of biological role, B-type di-heme cytochrome. Catalyzes the oxidation of superoxide to molecular oxygen and transfers the extracted electrons to ubiquinone through the two hemes. This is Probable superoxide oxidase CybB (cybB) from Yersinia pestis.